Here is a 151-residue protein sequence, read N- to C-terminus: Deoxyuridine 5'-triphosphate nucleotidohydrolase (151 aa).

Residues 70 to 72, N83, 87 to 89, and M97 each bind substrate; these read RSG and LID.

Belongs to the dUTPase family. It depends on Mg(2+) as a cofactor.

The catalysed reaction is dUTP + H2O = dUMP + diphosphate + H(+). Its pathway is pyrimidine metabolism; dUMP biosynthesis; dUMP from dCTP (dUTP route): step 2/2. In terms of biological role, this enzyme is involved in nucleotide metabolism: it produces dUMP, the immediate precursor of thymidine nucleotides and it decreases the intracellular concentration of dUTP so that uracil cannot be incorporated into DNA. This Actinobacillus pleuropneumoniae serotype 5b (strain L20) protein is Deoxyuridine 5'-triphosphate nucleotidohydrolase.